The following is a 288-amino-acid chain: Carbon monoxide dehydrogenase medium chain (288 aa).

In terms of domain architecture, FAD-binding PCMH-type spans Met-1–Thr-177. Residues Ala-32–Ser-36 and Thr-111–Asn-115 each bind FAD.

In terms of assembly, dimer of heterotrimers. Each heterotrimer consists of a large, a medium and a small subunit. Requires FAD as cofactor.

The catalysed reaction is CO + a quinone + H2O = a quinol + CO2. Functionally, catalyzes the oxidation of carbon monoxide to carbon dioxide. The sequence is that of Carbon monoxide dehydrogenase medium chain (coxM) from Afipia carboxidovorans (strain ATCC 49405 / DSM 1227 / KCTC 32145 / OM5) (Oligotropha carboxidovorans).